The following is a 209-amino-acid chain: Superoxide dismutase [Mn/Fe] (209 aa).

Residues histidine 38, histidine 90, aspartate 172, and histidine 176 each coordinate Fe(3+). The Mn(2+) site is built by histidine 38, histidine 90, aspartate 172, and histidine 176.

This sequence belongs to the iron/manganese superoxide dismutase family. Mn(2+) serves as cofactor. The cofactor is Fe(3+).

The enzyme catalyses 2 superoxide + 2 H(+) = H2O2 + O2. Destroys superoxide anion radicals which are normally produced within the cells and which are toxic to biological systems. Catalyzes the dismutation of superoxide anion radicals into O2 and H2O2 by successive reduction and oxidation of the transition metal ion at the active site. This Rickettsia typhi (strain ATCC VR-144 / Wilmington) protein is Superoxide dismutase [Mn/Fe] (sodB).